A 354-amino-acid chain; its full sequence is Guanine nucleotide-binding protein G(i) subunit alpha-3 (354 aa).

Gly2 carries N-myristoyl glycine lipidation. Cys3 carries S-palmitoyl cysteine lipidation. Positions Lys32–Tyr354 constitute a G-alpha domain. Residues Lys35–Thr48 are G1 motif. Gly42, Glu43, Ser44, Gly45, Lys46, Ser47, Thr48, Asp150, Ser151, Leu175, Arg176, Thr177, Arg178, Val179, Lys180, Thr181, Val201, Gly203, Asn269, Lys270, Asp272, Leu273, Cys325, Ala326, and Thr327 together coordinate GTP. A Mg(2+)-binding site is contributed by Ser47. The interval Asp173 to Thr181 is G2 motif. Mg(2+) is bound at residue Thr181. Residues Phe196 to Arg205 are G3 motif. The interval Ile265 to Asp272 is G4 motif. The tract at residues Thr324–Thr329 is G5 motif.

It belongs to the G-alpha family. G(i/o/t/z) subfamily. As to quaternary structure, heterotrimeric G proteins are composed of 3 units; alpha, beta and gamma. The alpha subunit contains the guanine nucleotide binding site. GTP binding causes dissociation of the heterotrimer, liberating the individual subunits so that they can interact with downstream effector proteins. Forms a complex with CCDC88A/GIV and EGFR which leads to enhanced EGFR signaling and triggering of cell migration; ligand stimulation is required for recruitment of GNAI3 to the complex. Interacts (inactive GDP-bound form) with CCDC88A/GIV (via GBA motif); the interaction leads to activation of GNAI3. Interacts (inactive GDP-bound form) with CCDC88C/DAPLE (via GBA motif); the interaction leads to activation of GNAI3. Interacts (inactive GDP-bound form) with NUCB1 (via GBA motif) and NUCB2 (via GBA motif); the interaction leads to activation of GNAI3. Interacts (inactive GDP-bound form) with PLCD4 (via GBA motif); the interaction leads to activation of GNAI3. Interacts with INSR; the interaction is probably mediated by CCDC88A/GIV. Interacts with GPSM1. Interacts (GDP-bound form) with GPSM2 (via GoLoco domains). Does not interact with RGS2. Interacts with RGS8 and RGS10; this strongly enhances the intrinsic GTPase activity. Interacts with RGS16; this strongly enhances the intrinsic GTPase activity. Interacts with RGS12. Interacts (via active GTP- or inactive GDP-bound form) with RGS14. Interacts (via active GTP-bound form) with TRPC5 (via ANK repeats) in a homotetrameric ion channel; the interaction is direct and activates the channel activity.

It localises to the cytoplasm. The protein resides in the cell membrane. The protein localises to the cytoskeleton. It is found in the microtubule organizing center. Its subcellular location is the centrosome. Functionally, heterotrimeric guanine nucleotide-binding proteins (G proteins) function as transducers downstream of G protein-coupled receptors (GPCRs) in numerous signaling cascades. The alpha chain contains the guanine nucleotide binding site and alternates between an active, GTP-bound state and an inactive, GDP-bound state. Signaling by an activated GPCR promotes GDP release and GTP binding. The alpha subunit has a low GTPase activity that converts bound GTP to GDP, thereby terminating the signal. Both GDP release and GTP hydrolysis are modulated by numerous regulatory proteins. Signaling is mediated via effector proteins, such as adenylate cyclase. Inhibits adenylate cyclase activity, leading to decreased intracellular cAMP levels. Stimulates the activity of receptor-regulated K(+) channels. The active GTP-bound form prevents the association of RGS14 with centrosomes and is required for the translocation of RGS14 from the cytoplasm to the plasma membrane. May play a role in cell division. The active GTP-bound form activates the calcium permeant TRPC5 ion channels. In Cricetulus griseus (Chinese hamster), this protein is Guanine nucleotide-binding protein G(i) subunit alpha-3 (GNAI3).